We begin with the raw amino-acid sequence, 438 residues long: V-type ATP synthase beta chain (438 aa).

This sequence belongs to the ATPase alpha/beta chains family.

In terms of biological role, produces ATP from ADP in the presence of a proton gradient across the membrane. The V-type beta chain is a regulatory subunit. The protein is V-type ATP synthase beta chain of Chlamydia abortus (strain DSM 27085 / S26/3) (Chlamydophila abortus).